Here is a 495-residue protein sequence, read N- to C-terminus: uncharacterized protein (495 aa).

Positions 1–17 (MRTLSLLILFLSTFLFA) are cleaved as a signal peptide.

This is an uncharacterized protein from Aquifex aeolicus (strain VF5).